Here is a 309-residue protein sequence, read N- to C-terminus: Beta-ketoacyl-[acyl-carrier-protein] synthase III (309 aa).

Active-site residues include cysteine 111 and histidine 236. Residues 237–241 (QANVR) are ACP-binding. Asparagine 266 is an active-site residue.

The protein belongs to the thiolase-like superfamily. FabH family. Homodimer.

The protein resides in the cytoplasm. The enzyme catalyses malonyl-[ACP] + acetyl-CoA + H(+) = 3-oxobutanoyl-[ACP] + CO2 + CoA. The protein operates within lipid metabolism; fatty acid biosynthesis. In terms of biological role, catalyzes the condensation reaction of fatty acid synthesis by the addition to an acyl acceptor of two carbons from malonyl-ACP. Catalyzes the first condensation reaction which initiates fatty acid synthesis and may therefore play a role in governing the total rate of fatty acid production. Possesses both acetoacetyl-ACP synthase and acetyl transacylase activities. Its substrate specificity determines the biosynthesis of branched-chain and/or straight-chain of fatty acids. This Aquifex aeolicus (strain VF5) protein is Beta-ketoacyl-[acyl-carrier-protein] synthase III.